We begin with the raw amino-acid sequence, 93 residues long: Small ribosomal subunit protein uS19 (93 aa).

It belongs to the universal ribosomal protein uS19 family.

Functionally, protein S19 forms a complex with S13 that binds strongly to the 16S ribosomal RNA. This chain is Small ribosomal subunit protein uS19, found in Anaplasma marginale (strain Florida).